We begin with the raw amino-acid sequence, 373 residues long: Peptide chain release factor 2 (373 aa).

The residue at position 252 (glutamine 252) is an N5-methylglutamine.

It belongs to the prokaryotic/mitochondrial release factor family. Post-translationally, methylated by PrmC. Methylation increases the termination efficiency of RF2.

The protein localises to the cytoplasm. Its function is as follows. Peptide chain release factor 2 directs the termination of translation in response to the peptide chain termination codons UGA and UAA. This chain is Peptide chain release factor 2, found in Staphylococcus saprophyticus subsp. saprophyticus (strain ATCC 15305 / DSM 20229 / NCIMB 8711 / NCTC 7292 / S-41).